Consider the following 247-residue polypeptide: Mast cell protease 8 (247 aa).

Residues 1–19 (MFLLLVLLVAALPVNAEGG) form the signal peptide. Glutamate 20 is a propeptide (activation peptide). One can recognise a Peptidase S1 domain in the interval 21–242 (IIWGTESKPH…FMPWIRKTMK (222 aa)). An N-linked (GlcNAc...) asparagine glycan is attached at asparagine 41. Cysteine 49 and cysteine 65 form a disulfide bridge. Residue histidine 64 is the Charge relay system of the active site. Asparagine 71 and asparagine 101 each carry an N-linked (GlcNAc...) asparagine glycan. Catalysis depends on aspartate 107, which acts as the Charge relay system. Disulfide bonds link cysteine 141–cysteine 206 and cysteine 171–cysteine 185. N-linked (GlcNAc...) asparagine glycosylation is found at asparagine 151 and asparagine 179. Serine 200 functions as the Charge relay system in the catalytic mechanism.

It belongs to the peptidase S1 family. Granzyme subfamily.

It localises to the secreted. The protein localises to the cytoplasmic granule. The sequence is that of Mast cell protease 8 (Mcpt8) from Mus musculus (Mouse).